Here is a 226-residue protein sequence, read N- to C-terminus: Leucyl/phenylalanyl-tRNA--protein transferase (226 aa).

It belongs to the L/F-transferase family.

Its subcellular location is the cytoplasm. The enzyme catalyses N-terminal L-lysyl-[protein] + L-leucyl-tRNA(Leu) = N-terminal L-leucyl-L-lysyl-[protein] + tRNA(Leu) + H(+). It catalyses the reaction N-terminal L-arginyl-[protein] + L-leucyl-tRNA(Leu) = N-terminal L-leucyl-L-arginyl-[protein] + tRNA(Leu) + H(+). It carries out the reaction L-phenylalanyl-tRNA(Phe) + an N-terminal L-alpha-aminoacyl-[protein] = an N-terminal L-phenylalanyl-L-alpha-aminoacyl-[protein] + tRNA(Phe). Its function is as follows. Functions in the N-end rule pathway of protein degradation where it conjugates Leu, Phe and, less efficiently, Met from aminoacyl-tRNAs to the N-termini of proteins containing an N-terminal arginine or lysine. This Pseudomonas entomophila (strain L48) protein is Leucyl/phenylalanyl-tRNA--protein transferase.